The chain runs to 267 residues: 2-keto-3-deoxy-L-rhamnonate aldolase (267 aa).

Catalysis depends on His-49, which acts as the Proton acceptor. Residue Gln-151 participates in substrate binding. Mg(2+) is bound at residue Glu-153. Substrate-binding residues include Ala-178 and Asp-179. Asp-179 contacts Mg(2+).

Belongs to the HpcH/HpaI aldolase family. KDR aldolase subfamily. As to quaternary structure, homohexamer. Requires Mg(2+) as cofactor.

It carries out the reaction 2-dehydro-3-deoxy-L-rhamnonate = (S)-lactaldehyde + pyruvate. In terms of biological role, catalyzes the reversible retro-aldol cleavage of 2-keto-3-deoxy-L-rhamnonate (KDR) to pyruvate and lactaldehyde. The chain is 2-keto-3-deoxy-L-rhamnonate aldolase from Shigella dysenteriae serotype 1 (strain Sd197).